Here is a 93-residue protein sequence, read N- to C-terminus: Pyrimidine/purine nucleoside phosphorylase (93 aa).

Belongs to the nucleoside phosphorylase PpnP family.

The enzyme catalyses a purine D-ribonucleoside + phosphate = a purine nucleobase + alpha-D-ribose 1-phosphate. The catalysed reaction is adenosine + phosphate = alpha-D-ribose 1-phosphate + adenine. It catalyses the reaction cytidine + phosphate = cytosine + alpha-D-ribose 1-phosphate. It carries out the reaction guanosine + phosphate = alpha-D-ribose 1-phosphate + guanine. The enzyme catalyses inosine + phosphate = alpha-D-ribose 1-phosphate + hypoxanthine. The catalysed reaction is thymidine + phosphate = 2-deoxy-alpha-D-ribose 1-phosphate + thymine. It catalyses the reaction uridine + phosphate = alpha-D-ribose 1-phosphate + uracil. It carries out the reaction xanthosine + phosphate = alpha-D-ribose 1-phosphate + xanthine. In terms of biological role, catalyzes the phosphorolysis of diverse nucleosides, yielding D-ribose 1-phosphate and the respective free bases. Can use uridine, adenosine, guanosine, cytidine, thymidine, inosine and xanthosine as substrates. Also catalyzes the reverse reactions. The polypeptide is Pyrimidine/purine nucleoside phosphorylase (Cellvibrio japonicus (strain Ueda107) (Pseudomonas fluorescens subsp. cellulosa)).